The primary structure comprises 211 residues: Protein 33K (211 aa).

Disordered regions lie at residues 1–95 and 107–140; these read MPPK…PCSL and AGSPTAPAAPTKRLEKTPRVRKTSSAIATRQDSP. The span at 24 to 65 shows a compositional bias: acidic residues; sequence DEEETWDDSQAEEVSDEEAEEQMESWDSLDEEDLEDVEEETI. Positions 83-92 are enriched in pro residues; it reads KTIPPLPPQP. Polar residues predominate over residues 129–140; it reads TSSAIATRQDSP. Residues 154–181 are necessary for nuclear subcellular location; the sequence is YAIFQQSRGQQLELKVKNRSLRSLTRSC. The segment at 160–180 is RS-repeat; required for splicing enhancer activity; the sequence is SRGQQLELKVKNRSLRSLTRS.

The protein belongs to the adenoviridae splicing factor family. In terms of assembly, homooligomer. Interacts with DBP; this interaction occurs at a unique vertex during genome packaging. Interacts with IVa2; this interaction occurs at a unique vertex during genome packaging and seems to potentiate IVa2 and 33K oligomerization. In terms of processing, phosphorylated in vitro by human PKA and PRKDC. PRKDC inhibits, whereas PKA activates the splicing factor.

The protein localises to the host nucleus. Functionally, promotes alternative splicing of late transcripts by promoting splicing at weak 3' splice sites. Required for the temporal activation of major late pre-mRNA splicing at late times of infection. Induces the splicing and expression of the late capsid vertex protein. Probably functions as the small terminase that is part of the molecular motor that translocates genomic DNA in empty capsid during DNA packaging. This motor is located at a unique vertex and comprises at least the IVa2 ATPase, the small terminase 33K and probably a portal. Forms a ring-like structure of about 17 nm in which genomic DNA is translocated into the capsid. Stimulates IVa2 ATPase activity in the presence of the viral genome. Once the DNA is packaged, the terminase detaches: the 33K protein is present in the empty particles, but not in the mature virions. Also involved in virion assembly. The protein is Protein 33K of Human adenovirus F serotype 40 (HAdV-40).